Reading from the N-terminus, the 204-residue chain is ATP-dependent Clp protease proteolytic subunit (204 aa).

Ser-100 (nucleophile) is an active-site residue. The active site involves His-125.

The protein belongs to the peptidase S14 family. Fourteen ClpP subunits assemble into 2 heptameric rings which stack back to back to give a disk-like structure with a central cavity, resembling the structure of eukaryotic proteasomes.

It localises to the cytoplasm. It carries out the reaction Hydrolysis of proteins to small peptides in the presence of ATP and magnesium. alpha-casein is the usual test substrate. In the absence of ATP, only oligopeptides shorter than five residues are hydrolyzed (such as succinyl-Leu-Tyr-|-NHMec, and Leu-Tyr-Leu-|-Tyr-Trp, in which cleavage of the -Tyr-|-Leu- and -Tyr-|-Trp bonds also occurs).. Its function is as follows. Cleaves peptides in various proteins in a process that requires ATP hydrolysis. Has a chymotrypsin-like activity. Plays a major role in the degradation of misfolded proteins. The sequence is that of ATP-dependent Clp protease proteolytic subunit from Anaeromyxobacter sp. (strain Fw109-5).